The sequence spans 128 residues: 3-aminoacrylate deaminase RutC (128 aa).

It belongs to the RutC family.

The catalysed reaction is (Z)-3-aminoacrylate + H2O + H(+) = 3-oxopropanoate + NH4(+). Functionally, involved in pyrimidine catabolism. Catalyzes the deamination of 3-aminoacrylate to malonic semialdehyde, a reaction that can also occur spontaneously. RutC may facilitate the reaction and modulate the metabolic fitness, rather than catalyzing essential functions. This chain is 3-aminoacrylate deaminase RutC, found in Azorhizobium caulinodans (strain ATCC 43989 / DSM 5975 / JCM 20966 / LMG 6465 / NBRC 14845 / NCIMB 13405 / ORS 571).